Here is a 373-residue protein sequence, read N- to C-terminus: Quinolinate synthase (373 aa).

2 residues coordinate iminosuccinate: His46 and Ser63. Position 109 (Cys109) interacts with [4Fe-4S] cluster. Iminosuccinate-binding positions include 142-144 (YMN) and Ser163. Cys232 is a binding site for [4Fe-4S] cluster. Residues 258-260 (HPE) and Thr275 contribute to the iminosuccinate site. Cys324 contacts [4Fe-4S] cluster.

Belongs to the quinolinate synthase family. Type 3 subfamily. [4Fe-4S] cluster serves as cofactor.

It is found in the cytoplasm. The catalysed reaction is iminosuccinate + dihydroxyacetone phosphate = quinolinate + phosphate + 2 H2O + H(+). It participates in cofactor biosynthesis; NAD(+) biosynthesis; quinolinate from iminoaspartate: step 1/1. Its function is as follows. Catalyzes the condensation of iminoaspartate with dihydroxyacetone phosphate to form quinolinate. In Acidobacterium capsulatum (strain ATCC 51196 / DSM 11244 / BCRC 80197 / JCM 7670 / NBRC 15755 / NCIMB 13165 / 161), this protein is Quinolinate synthase.